A 490-amino-acid chain; its full sequence is Betaine aldehyde dehydrogenase (490 aa).

The K(+) site is built by T26, I27, and D93. 150–152 (GAW) provides a ligand contact to NAD(+). K162 functions as the Charge relay system in the catalytic mechanism. 176-179 (KPSE) lines the NAD(+) pocket. Position 180 (V180) interacts with K(+). Residue 230–233 (GVAS) coordinates NAD(+). Residue L246 coordinates K(+). E252 acts as the Proton acceptor in catalysis. The NAD(+) site is built by G254, C286, and E387. C286 acts as the Nucleophile in catalysis. C286 is subject to Cysteine sulfenic acid (-SOH). K(+)-binding residues include K457 and G460. Residue E464 is the Charge relay system of the active site.

It belongs to the aldehyde dehydrogenase family. Dimer of dimers. Requires K(+) as cofactor.

The enzyme catalyses betaine aldehyde + NAD(+) + H2O = glycine betaine + NADH + 2 H(+). It participates in amine and polyamine biosynthesis; betaine biosynthesis via choline pathway; betaine from betaine aldehyde: step 1/1. Its function is as follows. Involved in the biosynthesis of the osmoprotectant glycine betaine. Catalyzes the irreversible oxidation of betaine aldehyde to the corresponding acid. This chain is Betaine aldehyde dehydrogenase, found in Escherichia coli (strain SE11).